Consider the following 967-residue polypeptide: uncharacterized protein (967 aa).

The N-terminal stretch at 1–29 (MKKKLKSVLIWFLIFTFNLSLGSFREVFA) is a signal peptide. 2 BIG2 domains span residues 38–107 (TAIT…QDGS) and 133–190 (LPVG…VNDG).

This is an uncharacterized protein from Clostridium acetobutylicum (strain ATCC 824 / DSM 792 / JCM 1419 / IAM 19013 / LMG 5710 / NBRC 13948 / NRRL B-527 / VKM B-1787 / 2291 / W).